A 152-amino-acid polypeptide reads, in one-letter code: 3-hydroxyacyl-[acyl-carrier-protein] dehydratase FabZ (152 aa).

His57 is an active-site residue.

Belongs to the thioester dehydratase family. FabZ subfamily.

It is found in the cytoplasm. It carries out the reaction a (3R)-hydroxyacyl-[ACP] = a (2E)-enoyl-[ACP] + H2O. Functionally, involved in unsaturated fatty acids biosynthesis. Catalyzes the dehydration of short chain beta-hydroxyacyl-ACPs and long chain saturated and unsaturated beta-hydroxyacyl-ACPs. The polypeptide is 3-hydroxyacyl-[acyl-carrier-protein] dehydratase FabZ (Bradyrhizobium sp. (strain BTAi1 / ATCC BAA-1182)).